A 460-amino-acid polypeptide reads, in one-letter code: Receptor-like cytosolic serine/threonine-protein kinase RBK2 (460 aa).

The segment at 1 to 67 is disordered; the sequence is MNSASAHDLR…DADTDVQCKN (67 aa). Residues 7–23 are compositionally biased toward basic and acidic residues; sequence HDLRLLEVDKEKQDPKS. The Protein kinase domain occupies 143–415; it reads FSPENIIGRG…VELLLGHEDV (273 aa). ATP-binding positions include 149 to 157 and lysine 171; that span reads IGRGGYADV. Aspartate 267 functions as the Proton acceptor in the catalytic mechanism. A Phosphothreonine modification is found at threonine 307. Residue tyrosine 315 is modified to Phosphotyrosine.

Belongs to the protein kinase superfamily. Ser/Thr protein kinase family. Interacts with ARAC5 and ARAC10.

The protein resides in the cytoplasm. The enzyme catalyses L-seryl-[protein] + ATP = O-phospho-L-seryl-[protein] + ADP + H(+). It catalyses the reaction L-threonyl-[protein] + ATP = O-phospho-L-threonyl-[protein] + ADP + H(+). This chain is Receptor-like cytosolic serine/threonine-protein kinase RBK2 (RBK2), found in Arabidopsis thaliana (Mouse-ear cress).